The sequence spans 379 residues: Isocitrate dehydrogenase [NAD] subunit 2, mitochondrial (379 aa).

The N-terminal 27 residues, M1–F27, are a transit peptide targeting the mitochondrion. Positions 129, 139, 160, and 247 each coordinate substrate. The Mg(2+) site is built by D247, D273, and D277.

Belongs to the isocitrate and isopropylmalate dehydrogenases family. As to quaternary structure, octamer of two non-identical subunits IDH1 and IDH2. Mg(2+) serves as cofactor. It depends on Mn(2+) as a cofactor.

The protein localises to the mitochondrion. It catalyses the reaction D-threo-isocitrate + NAD(+) = 2-oxoglutarate + CO2 + NADH. In terms of biological role, performs an essential role in the oxidative function of the citric acid cycle and is involved in glutamate biosynthesis. Also binds RNA; specifically to the 5'-untranslated leaders of mitochondrial mRNAs. This is Isocitrate dehydrogenase [NAD] subunit 2, mitochondrial (idh2) from Schizosaccharomyces pombe (strain 972 / ATCC 24843) (Fission yeast).